A 277-amino-acid chain; its full sequence is Phosphoenolpyruvate synthase regulatory protein (277 aa).

157 to 164 (GVSRCGKT) is a binding site for ADP.

It belongs to the pyruvate, phosphate/water dikinase regulatory protein family. PSRP subfamily.

The catalysed reaction is [pyruvate, water dikinase] + ADP = [pyruvate, water dikinase]-phosphate + AMP + H(+). It catalyses the reaction [pyruvate, water dikinase]-phosphate + phosphate + H(+) = [pyruvate, water dikinase] + diphosphate. Its function is as follows. Bifunctional serine/threonine kinase and phosphorylase involved in the regulation of the phosphoenolpyruvate synthase (PEPS) by catalyzing its phosphorylation/dephosphorylation. The protein is Phosphoenolpyruvate synthase regulatory protein of Escherichia coli O1:K1 / APEC.